Reading from the N-terminus, the 483-residue chain is FAD-linked oxidoreductase easE (483 aa).

Positions 10 to 193 (QGRLPFYSAV…TEATVRVFSD (184 aa)) constitute an FAD-binding PCMH-type domain.

This sequence belongs to the oxygen-dependent FAD-linked oxidoreductase family. FAD is required as a cofactor.

It participates in alkaloid biosynthesis; ergot alkaloid biosynthesis. FAD-linked oxidoreductase; part of the gene cluster that mediates the biosynthesis of fungal ergot alkaloid. DmaW catalyzes the first step of ergot alkaloid biosynthesis by condensing dimethylallyl diphosphate (DMAP) and tryptophan to form 4-dimethylallyl-L-tryptophan. The second step is catalyzed by the methyltransferase easF that methylates 4-dimethylallyl-L-tryptophan in the presence of S-adenosyl-L-methionine, resulting in the formation of 4-dimethylallyl-L-abrine. The catalase easC and the FAD-dependent oxidoreductase easE then transform 4-dimethylallyl-L-abrine to chanoclavine-I which is further oxidized by easD in the presence of NAD(+), resulting in the formation of chanoclavine-I aldehyde. Agroclavine dehydrogenase easG then mediates the conversion of chanoclavine-I aldehyde to agroclavine via a non-enzymatic adduct reaction: the substrate is an iminium intermediate that is formed spontaneously from chanoclavine-I aldehyde in the presence of glutathione. The presence of easA is not required to complete this reaction. Further conversion of agroclavine to paspalic acid is a two-step process involving oxidation of agroclavine to elymoclavine and of elymoclavine to paspalic acid, the second step being performed by the elymoclavine oxidase cloA. Paspalic acid is then further converted to D-lysergic acid. Ergopeptines are assembled from D-lysergic acid and three different amino acids by the D-lysergyl-peptide-synthetases composed each of a monomudular and a trimodular nonribosomal peptide synthetase subunit. LpsB and lpsC encode the monomodular subunits responsible for D-lysergic acid activation and incorporation into the ergopeptine backbone. LpsA1 and A2 subunits encode the trimodular nonribosomal peptide synthetase assembling the tripeptide portion of ergopeptines. LpsA1 is responsible for formation of the major ergopeptine, ergotamine, and lpsA2 for alpha-ergocryptine, the minor ergopeptine of the total alkaloid mixture elaborated by C.purpurea. D-lysergyl-tripeptides are assembled by the nonribosomal peptide synthetases and released as N-(D-lysergyl-aminoacyl)-lactams. Cyclolization of the D-lysergyl-tripeptides is performed by the Fe(2+)/2-ketoglutarate-dependent dioxygenase easH which introduces a hydroxyl group into N-(D-lysergyl-aminoacyl)-lactam at alpha-C of the aminoacyl residue followed by spontaneous condensation with the terminal lactam carbonyl group. This is FAD-linked oxidoreductase easE from Claviceps purpurea (strain 20.1) (Ergot fungus).